A 121-amino-acid chain; its full sequence is Large ribosomal subunit protein bL21 (121 aa).

This sequence belongs to the bacterial ribosomal protein bL21 family. In terms of assembly, part of the 50S ribosomal subunit. Contacts protein L20.

In terms of biological role, this protein binds to 23S rRNA in the presence of protein L20. This Gloeobacter violaceus (strain ATCC 29082 / PCC 7421) protein is Large ribosomal subunit protein bL21.